We begin with the raw amino-acid sequence, 381 residues long: Lipid-A-disaccharide synthase (381 aa).

Belongs to the LpxB family.

The catalysed reaction is a lipid X + a UDP-2-N,3-O-bis[(3R)-3-hydroxyacyl]-alpha-D-glucosamine = a lipid A disaccharide + UDP + H(+). It participates in bacterial outer membrane biogenesis; LPS lipid A biosynthesis. In terms of biological role, condensation of UDP-2,3-diacylglucosamine and 2,3-diacylglucosamine-1-phosphate to form lipid A disaccharide, a precursor of lipid A, a phosphorylated glycolipid that anchors the lipopolysaccharide to the outer membrane of the cell. The chain is Lipid-A-disaccharide synthase from Solibacter usitatus (strain Ellin6076).